A 58-amino-acid polypeptide reads, in one-letter code: Small integral membrane protein 11 (58 aa).

A helical membrane pass occupies residues 9 to 29; sequence FPLLLYILAAKTLILCLAFAG. Positions 29-58 form a coiled coil; it reads GVKVYQRKRLEAKQQKVEAEKRKQAEKKES.

It is found in the membrane. This Bos taurus (Bovine) protein is Small integral membrane protein 11 (SMIM11).